A 75-amino-acid chain; its full sequence is Small ribosomal subunit protein bS18 (75 aa).

It belongs to the bacterial ribosomal protein bS18 family. Part of the 30S ribosomal subunit. Forms a tight heterodimer with protein bS6.

Binds as a heterodimer with protein bS6 to the central domain of the 16S rRNA, where it helps stabilize the platform of the 30S subunit. This is Small ribosomal subunit protein bS18 from Cereibacter sphaeroides (strain ATCC 17029 / ATH 2.4.9) (Rhodobacter sphaeroides).